A 162-amino-acid chain; its full sequence is MATAEIEEIPALLKPGQTVAGLDLGTKTIGLAVSDLGLSFAHPRPVIKRVKFTIDAQVLLKALETDKVGVIVIGLPMNMDGTAGPRVQATRAFVRTMQPLTDLPFVFWDERLSTVAVERALIGMDVSRGKRADRIDSAAAAFILQGALDRLHMMRRNDYDAG.

This sequence belongs to the YqgF nuclease family.

The protein resides in the cytoplasm. Could be a nuclease involved in processing of the 5'-end of pre-16S rRNA. This is Putative pre-16S rRNA nuclease from Brucella melitensis biotype 1 (strain ATCC 23456 / CCUG 17765 / NCTC 10094 / 16M).